Reading from the N-terminus, the 410-residue chain is Na(+)/H(+) antiporter NhaS4 (410 aa).

11 helical membrane passes run 7 to 27 (LLIL…GLLF), 33 to 53 (PPVI…LGLL), 69 to 89 (FLYL…GLEL), 107 to 127 (VSIF…LYSL), 135 to 155 (FIPF…PVLA), 173 to 193 (LTCA…AIAV), 199 to 219 (IFGA…MVTL), 241 to 261 (LLTF…WIGI), 291 to 311 (FVST…TDLG), 319 to 339 (WAVC…GVYV), and 376 to 396 (GVIS…TTII).

This sequence belongs to the monovalent cation:proton antiporter 2 (CPA2) transporter (TC 2.A.37) family.

It localises to the membrane. Functionally, na(+)/H(+) antiporter. The sequence is that of Na(+)/H(+) antiporter NhaS4 (nhaS4) from Synechocystis sp. (strain ATCC 27184 / PCC 6803 / Kazusa).